The sequence spans 609 residues: Glutamine--fructose-6-phosphate aminotransferase [isomerizing] (609 aa).

Catalysis depends on C2, which acts as the Nucleophile; for GATase activity. The Glutamine amidotransferase type-2 domain maps to 2–218 (CGIVGAVAQR…EGDVVEVTRR (217 aa)). SIS domains lie at 286-426 (ADAL…LKGA) and 458-599 (LAEG…VDQP). The active-site For Fru-6P isomerization activity is K604.

Homodimer.

It localises to the cytoplasm. The enzyme catalyses D-fructose 6-phosphate + L-glutamine = D-glucosamine 6-phosphate + L-glutamate. Its function is as follows. Catalyzes the first step in hexosamine metabolism, converting fructose-6P into glucosamine-6P using glutamine as a nitrogen source. In Yersinia pestis, this protein is Glutamine--fructose-6-phosphate aminotransferase [isomerizing].